A 344-amino-acid chain; its full sequence is Putative esterase NocK (344 aa).

Residues M1–A34 constitute a signal peptide (tat-type signal). Positions G265–D295 are disordered. Residues G266 to R276 are compositionally biased toward basic and acidic residues.

The protein belongs to the AB hydrolase superfamily. Post-translationally, predicted to be exported by the Tat system. The position of the signal peptide cleavage has not been experimentally proven.

This chain is Putative esterase NocK, found in Nocardia uniformis subsp. tsuyamanensis.